The primary structure comprises 370 residues: MEHLPEQYRQLFPTLQTHTMLASCSQSALAEPVSRAIQDYYDSLLYKGTNWKEAIEKTEFARNEFAKLIGAEPDEVAIVPSVSDALVSVASSLTAFGKKHVVYTDMDFPAVPHVWQAHSDYTVSVIPSIDGVLPLEQYETHISDETVLTCVPHVHYRDGYVQDIKAIAEISQRKGSLLFVDAYQSAGHIPIDVKEWGVDMLAAGTRKYLLGIPGVAFLYVRKELADALKPKASAWFGRESGFDGAYAKVARRFQTGTPAFISVYAAAAALSLLNHIGVSHIRDHVKTICADAVQYAAEKGLQLAAAQGGIQPGMVAIRDERASETAGLLKKKKVICAPRENVIRLAPHFYNTKEEMRHAIDEIAAKTIHK.

Position 207 is an N6-(pyridoxal phosphate)lysine (Lys-207).

The protein belongs to the class-V pyridoxal-phosphate-dependent aminotransferase family. Requires pyridoxal 5'-phosphate as cofactor.

This is an uncharacterized protein from Bacillus subtilis (strain 168).